The chain runs to 744 residues: 3-isopropylmalate dehydratase (744 aa).

Residues Cys-341, Cys-401, and Cys-404 each contribute to the [4Fe-4S] cluster site.

This sequence belongs to the aconitase/IPM isomerase family. Monomer. The cofactor is [4Fe-4S] cluster.

It carries out the reaction (2R,3S)-3-isopropylmalate = (2S)-2-isopropylmalate. The protein operates within amino-acid biosynthesis; L-leucine biosynthesis; L-leucine from 3-methyl-2-oxobutanoate: step 2/4. In terms of biological role, catalyzes the isomerization between 2-isopropylmalate and 3-isopropylmalate, via the formation of 2-isopropylmaleate. This Phycomyces blakesleeanus (strain ATCC 8743b / DSM 1359 / FGSC 10004 / NBRC 33097 / NRRL 1555) protein is 3-isopropylmalate dehydratase (leu1).